Here is a 339-residue protein sequence, read N- to C-terminus: DNA-directed RNA polymerase subunit alpha (339 aa).

The interval 1–233 (MVREEVAGST…DLFLPFLHAE (233 aa)) is alpha N-terminal domain (alpha-NTD). The segment at 264–339 (KKGIPLNCIF…IDLLKNKLSF (76 aa)) is alpha C-terminal domain (alpha-CTD).

The protein belongs to the RNA polymerase alpha chain family. In terms of assembly, in plastids the minimal PEP RNA polymerase catalytic core is composed of four subunits: alpha, beta, beta', and beta''. When a (nuclear-encoded) sigma factor is associated with the core the holoenzyme is formed, which can initiate transcription.

Its subcellular location is the plastid. It localises to the chloroplast. It catalyses the reaction RNA(n) + a ribonucleoside 5'-triphosphate = RNA(n+1) + diphosphate. Functionally, DNA-dependent RNA polymerase catalyzes the transcription of DNA into RNA using the four ribonucleoside triphosphates as substrates. The protein is DNA-directed RNA polymerase subunit alpha of Agropyron cristatum (Crested wheatgrass).